Reading from the N-terminus, the 338-residue chain is Auxin-responsive protein IAA9 (338 aa).

The tract at residues 1 to 25 is disordered; sequence MSPEEELQSNVSVASSSPTSNCISR. The segment covering 9–21 has biased composition (low complexity); it reads SNVSVASSSPTSN. Residues 68-72 carry the EAR-like (transcriptional repression) motif; it reads LTLGL. Residues 150 to 186 are disordered; the sequence is ATQSVTKKDVPQNIPKGQSSTTNNSSSPPAAKAQIVG. Residues 168–180 show a composition bias toward low complexity; it reads SSTTNNSSSPPAA. The 103-residue stretch at 216-318 folds into the PB1 domain; that stretch reads ALFVKVSMDG…VCKKLKIMKG (103 aa).

This sequence belongs to the Aux/IAA family. In terms of assembly, homodimers and heterodimers. Interacts with TPL. Post-translationally, phosphorylated by phytochrome A in vitro. In terms of tissue distribution, highly expressed in the whole plant.

The protein resides in the nucleus. Its function is as follows. Aux/IAA proteins are short-lived transcriptional factors that function as repressors of early auxin response genes at low auxin concentrations. Repression is thought to result from the interaction with auxin response factors (ARFs), proteins that bind to the auxin-responsive promoter element (AuxRE). Formation of heterodimers with ARF proteins may alter their ability to modulate early auxin response genes expression. This is Auxin-responsive protein IAA9 (IAA9) from Arabidopsis thaliana (Mouse-ear cress).